A 224-amino-acid polypeptide reads, in one-letter code: Deoxyribose-phosphate aldolase (224 aa).

Asp92 acts as the Proton donor/acceptor in catalysis. The active-site Schiff-base intermediate with acetaldehyde is Lys154. Lys183 acts as the Proton donor/acceptor in catalysis.

It belongs to the DeoC/FbaB aldolase family. DeoC type 1 subfamily.

It localises to the cytoplasm. It catalyses the reaction 2-deoxy-D-ribose 5-phosphate = D-glyceraldehyde 3-phosphate + acetaldehyde. It functions in the pathway carbohydrate degradation; 2-deoxy-D-ribose 1-phosphate degradation; D-glyceraldehyde 3-phosphate and acetaldehyde from 2-deoxy-alpha-D-ribose 1-phosphate: step 2/2. Functionally, catalyzes a reversible aldol reaction between acetaldehyde and D-glyceraldehyde 3-phosphate to generate 2-deoxy-D-ribose 5-phosphate. This Histophilus somni (strain 129Pt) (Haemophilus somnus) protein is Deoxyribose-phosphate aldolase.